Here is a 312-residue protein sequence, read N- to C-terminus: NADPH-dependent alpha-keto amide reductase (312 aa).

NADPH-binding residues include glycine 25, threonine 26, arginine 27, and aspartate 59. Catalysis depends on proton donor residues tyrosine 64 and histidine 122. Residue serine 123 is modified to Phosphoserine. The NADPH site is built by serine 157, glutamine 179, serine 208, leucine 210, threonine 257, threonine 258, serine 259, serine 260, lysine 261, and arginine 264.

It belongs to the aldo/keto reductase family. As to quaternary structure, monomer. The N-terminus is blocked.

Its subcellular location is the cytoplasm. The protein localises to the nucleus. Its function is as follows. Reduces aromatic alpha-keto amides, aliphatic and aromatic alpha-keto esters, but not beta-keto esters. The chain is NADPH-dependent alpha-keto amide reductase from Saccharomyces cerevisiae (strain ATCC 204508 / S288c) (Baker's yeast).